We begin with the raw amino-acid sequence, 868 residues long: Translation initiation factor IF-2 (868 aa).

A compositionally biased stretch (basic and acidic residues) spans 199–209 (SKKEEVKPEKV). The tract at residues 199–269 (SKKEEVKPEK…GTEKSDKYRE (71 aa)) is disordered. Positions 249 to 260 (RGGRSKFKKKKG) are enriched in basic residues. Positions 368 to 537 (GRAPVVTIMG…LLQSEVLELK (170 aa)) constitute a tr-type G domain. The segment at 377-384 (GHVDHGKT) is G1. Residue 377–384 (GHVDHGKT) participates in GTP binding. The segment at 402–406 (GITQH) is G2. The tract at residues 423 to 426 (DTPG) is G3. Residues 423–427 (DTPGH) and 477–480 (NKMD) contribute to the GTP site. A G4 region spans residues 477–480 (NKMD). Positions 513 to 515 (SAK) are G5.

Belongs to the TRAFAC class translation factor GTPase superfamily. Classic translation factor GTPase family. IF-2 subfamily.

It is found in the cytoplasm. Its function is as follows. One of the essential components for the initiation of protein synthesis. Protects formylmethionyl-tRNA from spontaneous hydrolysis and promotes its binding to the 30S ribosomal subunits. Also involved in the hydrolysis of GTP during the formation of the 70S ribosomal complex. The protein is Translation initiation factor IF-2 of Legionella pneumophila (strain Paris).